A 360-amino-acid chain; its full sequence is Phospho-N-acetylmuramoyl-pentapeptide-transferase (360 aa).

The next 10 helical transmembrane spans lie at 21-41 (YITF…LWIG), 73-93 (TMGG…WADL), 98-118 (VWFV…DDYW), 132-152 (WKYF…YAVG), 168-188 (FMPQ…VGTS), 199-219 (GLAI…AWAT), 236-256 (AGEL…FLWY), 263-283 (VFMG…IAVL), 288-308 (LLLV…ILQV), and 338-358 (VIVC…VTLK).

It belongs to the glycosyltransferase 4 family. MraY subfamily. Requires Mg(2+) as cofactor.

Its subcellular location is the cell inner membrane. It carries out the reaction UDP-N-acetyl-alpha-D-muramoyl-L-alanyl-gamma-D-glutamyl-meso-2,6-diaminopimeloyl-D-alanyl-D-alanine + di-trans,octa-cis-undecaprenyl phosphate = di-trans,octa-cis-undecaprenyl diphospho-N-acetyl-alpha-D-muramoyl-L-alanyl-D-glutamyl-meso-2,6-diaminopimeloyl-D-alanyl-D-alanine + UMP. The protein operates within cell wall biogenesis; peptidoglycan biosynthesis. In terms of biological role, catalyzes the initial step of the lipid cycle reactions in the biosynthesis of the cell wall peptidoglycan: transfers peptidoglycan precursor phospho-MurNAc-pentapeptide from UDP-MurNAc-pentapeptide onto the lipid carrier undecaprenyl phosphate, yielding undecaprenyl-pyrophosphoryl-MurNAc-pentapeptide, known as lipid I. The protein is Phospho-N-acetylmuramoyl-pentapeptide-transferase of Actinobacillus pleuropneumoniae serotype 7 (strain AP76).